The primary structure comprises 459 residues: Ribulose bisphosphate carboxylase (459 aa).

Residue asparagine 111 participates in substrate binding. The active-site Proton acceptor is the lysine 166. Lysine 168 serves as a coordination point for substrate. The Mg(2+) site is built by lysine 191, aspartate 193, and glutamate 194. Lysine 191 carries the post-translational modification N6-carboxylysine. Histidine 287 serves as the catalytic Proton acceptor. Substrate-binding residues include arginine 288, histidine 321, and serine 368.

It belongs to the RuBisCO large chain family. Type II subfamily. As to quaternary structure, homodimer. It depends on Mg(2+) as a cofactor.

The catalysed reaction is 2 (2R)-3-phosphoglycerate + 2 H(+) = D-ribulose 1,5-bisphosphate + CO2 + H2O. The enzyme catalyses D-ribulose 1,5-bisphosphate + O2 = 2-phosphoglycolate + (2R)-3-phosphoglycerate + 2 H(+). Its function is as follows. RuBisCO catalyzes two reactions: the carboxylation of D-ribulose 1,5-bisphosphate, the primary event in carbon dioxide fixation, as well as the oxidative fragmentation of the pentose substrate. Both reactions occur simultaneously and in competition at the same active site. The sequence is that of Ribulose bisphosphate carboxylase from Polaromonas naphthalenivorans (strain CJ2).